The chain runs to 155 residues: Cytochrome c-type biogenesis protein CcmE (155 aa).

Topologically, residues 1–8 (MNPIRKKR) are cytoplasmic. The chain crosses the membrane as a helical; Signal-anchor for type II membrane protein span at residues 9 to 29 (LYWILALLCGVSIAMALALSA). Over 30-155 (LQENINLFYT…PKRVKQESTR (126 aa)) the chain is Periplasmic. Residues histidine 124 and tyrosine 128 each contribute to the heme site.

This sequence belongs to the CcmE/CycJ family.

It is found in the cell inner membrane. In terms of biological role, heme chaperone required for the biogenesis of c-type cytochromes. Transiently binds heme delivered by CcmC and transfers the heme to apo-cytochromes in a process facilitated by CcmF and CcmH. In Janthinobacterium sp. (strain Marseille) (Minibacterium massiliensis), this protein is Cytochrome c-type biogenesis protein CcmE.